The following is a 321-amino-acid chain: MFAPHTNIMSIARVLIIIASISVICITLFISRPVTRESSIIIAPKTRDMRAEQIRLFALNAMVKANSHTLPPRSKNISAKNLCSRRMTCAPHNRRYETMLKVSPKYKMVNCVVQKSMSTMMTGAMCYLYDEKAYADSGRTFDDEFSTRFCKNKNEFSSVNAVRDAYNISFVKTDWLFSMITRDPIDRFVSGYVDRCVRISQKNETGQCNGCGLNMTCFIENEYKRLMEISFKRKTHRTMEDAHFFPQIWHCDLNEDLEFFEFIQYSNNPETTMMPQLEEMLKRQKVPSDSIRFIKNELLYKKSSHSTTGTPASRFYRSRYS.

Residues 11–31 (IARVLIIIASISVICITLFIS) form a helical membrane-spanning segment.

The protein to C.elegans C41C4.1 and C18B2.2.

The protein resides in the membrane. The chain is Putative sulfotransferase vep-2 from Caenorhabditis elegans.